A 158-amino-acid polypeptide reads, in one-letter code: Large ribosomal subunit protein uL13 (158 aa).

A disordered region spans residues 129–158 (PEHGHHAQKPVALDFGAMNNKNGRGNNAGR). Over residues 144 to 158 (GAMNNKNGRGNNAGR) the composition is skewed to low complexity.

This sequence belongs to the universal ribosomal protein uL13 family. Part of the 50S ribosomal subunit.

This protein is one of the early assembly proteins of the 50S ribosomal subunit, although it is not seen to bind rRNA by itself. It is important during the early stages of 50S assembly. This is Large ribosomal subunit protein uL13 from Anaplasma phagocytophilum (strain HZ).